Here is a 512-residue protein sequence, read N- to C-terminus: DEAD-box ATP-dependent RNA helicase 5 (512 aa).

Disordered stretches follow at residues 1–33 (MGRS…KLEA) and 45–76 (ATST…GGGK). Positions 14–45 (SRKSKKEKKSKKDKKRKLEAEAEVVVVEAAAA) form a coiled coil. Positions 16 to 30 (KSKKEKKSKKDKKRK) are enriched in basic residues. The short motif at 94–120 (SSFAATALPPQVLDCCKGFERPSPIQA) is the Q motif element. The Helicase ATP-binding domain occupies 123–300 (WPYLLDGRDF…QEFMDPNPIK (178 aa)). ATP is bound at residue 136-143 (AATGSGKT). Positions 248–251 (DEAD) match the DEAD box motif. Residues 333-476 (LLDKYHKAQR…VVPPALTKFG (144 aa)) form the Helicase C-terminal domain.

It belongs to the DEAD box helicase family. DDX5/DBP2 subfamily.

The protein localises to the nucleus. The protein resides in the nucleolus. The catalysed reaction is ATP + H2O = ADP + phosphate + H(+). Its function is as follows. ATP-dependent RNA helicase required for 60S ribosomal subunit synthesis. Involved in efficient pre-rRNA processing, predominantly at site A3, which is necessary for the normal formation of 25S and 5.8S rRNAs. The chain is DEAD-box ATP-dependent RNA helicase 5 from Oryza sativa subsp. japonica (Rice).